Here is a 101-residue protein sequence, read N- to C-terminus: ATP-dependent Clp protease adapter protein ClpS (101 aa).

The disordered stretch occupies residues 1-24 (MVVASAPAKPGSVGQQESASRDAT). Over residues 13 to 23 (VGQQESASRDA) the composition is skewed to polar residues.

It belongs to the ClpS family. As to quaternary structure, binds to the N-terminal domain of the chaperone ClpA.

Functionally, involved in the modulation of the specificity of the ClpAP-mediated ATP-dependent protein degradation. This Mycobacterium marinum (strain ATCC BAA-535 / M) protein is ATP-dependent Clp protease adapter protein ClpS.